We begin with the raw amino-acid sequence, 282 residues long: Pyrroline-5-carboxylate reductase (282 aa).

This sequence belongs to the pyrroline-5-carboxylate reductase family.

The enzyme catalyses L-proline + NADP(+) = (S)-1-pyrroline-5-carboxylate + NADPH + 2 H(+). It catalyses the reaction L-proline + NAD(+) = (S)-1-pyrroline-5-carboxylate + NADH + 2 H(+). It functions in the pathway amino-acid biosynthesis; L-proline biosynthesis; L-proline from L-glutamate 5-semialdehyde: step 1/1. The protein is Pyrroline-5-carboxylate reductase (pro3) of Schizosaccharomyces pombe (strain 972 / ATCC 24843) (Fission yeast).